The sequence spans 249 residues: Protection of telomeres protein poz1 (249 aa).

As to quaternary structure, interacts with pot1, rap1 and tpz1.

It localises to the cytoplasm. The protein localises to the nucleus. The protein resides in the chromosome. It is found in the telomere. Functionally, telomeric DNA-binding protein that negatively regulates telomerase and telomere length. This chain is Protection of telomeres protein poz1 (poz1), found in Schizosaccharomyces pombe (strain 972 / ATCC 24843) (Fission yeast).